We begin with the raw amino-acid sequence, 227 residues long: ATP-dependent dethiobiotin synthetase BioD (227 aa).

An ATP-binding site is contributed by 13–18; the sequence is NIGKTI. Position 17 (Thr-17) interacts with Mg(2+). Lys-38 is an active-site residue. Ser-42 serves as a coordination point for substrate. ATP contacts are provided by residues Asp-55, 117-120, 177-178, 206-208, and Asn-213; these read EGFG, NH, and PFI. Mg(2+) contacts are provided by Asp-55 and Glu-117.

This sequence belongs to the dethiobiotin synthetase family. Homodimer. The cofactor is Mg(2+).

The protein localises to the cytoplasm. The catalysed reaction is (7R,8S)-7,8-diammoniononanoate + CO2 + ATP = (4R,5S)-dethiobiotin + ADP + phosphate + 3 H(+). It participates in cofactor biosynthesis; biotin biosynthesis; biotin from 7,8-diaminononanoate: step 1/2. In terms of biological role, catalyzes a mechanistically unusual reaction, the ATP-dependent insertion of CO2 between the N7 and N8 nitrogen atoms of 7,8-diaminopelargonic acid (DAPA, also called 7,8-diammoniononanoate) to form a ureido ring. The protein is ATP-dependent dethiobiotin synthetase BioD of Wigglesworthia glossinidia brevipalpis.